The following is a 257-amino-acid chain: Phosphatidylglycerol--prolipoprotein diacylglyceryl transferase (257 aa).

The next 4 membrane-spanning stretches (helical) occupy residues 8 to 28 (IFGL…ILAY), 48 to 68 (VFIV…VIFN), 84 to 104 (EGGL…YLMS), and 109 to 129 (LNFL…QAIG). Residue Arg-130 coordinates a 1,2-diacyl-sn-glycero-3-phospho-(1'-sn-glycerol). The next 3 membrane-spanning stretches (helical) occupy residues 169 to 189 (PTFL…LLIT), 196 to 216 (GSIF…IEGL), and 225 to 245 (SLRM…ILII).

This sequence belongs to the Lgt family.

It is found in the cell membrane. It carries out the reaction L-cysteinyl-[prolipoprotein] + a 1,2-diacyl-sn-glycero-3-phospho-(1'-sn-glycerol) = an S-1,2-diacyl-sn-glyceryl-L-cysteinyl-[prolipoprotein] + sn-glycerol 1-phosphate + H(+). The protein operates within protein modification; lipoprotein biosynthesis (diacylglyceryl transfer). Catalyzes the transfer of the diacylglyceryl group from phosphatidylglycerol to the sulfhydryl group of the N-terminal cysteine of a prolipoprotein, the first step in the formation of mature lipoproteins. The chain is Phosphatidylglycerol--prolipoprotein diacylglyceryl transferase from Clostridium novyi (strain NT).